Consider the following 199-residue polypeptide: Single-stranded DNA cytosine deaminase (199 aa).

The Bipartite nuclear localization signal signature appears at 1–30; that stretch reads MDSLLKKQRQFLYQFKNVRWAKGRHETYLC. The segment at 2–26 is interaction with SUPT6H; it reads DSLLKKQRQFLYQFKNVRWAKGRHE. A CMP/dCMP-type deaminase domain is found at 23–130; it reads GRHETYLCYV…KAEPEGLRRL (108 aa). Threonine 27 bears the Phosphothreonine; by PKA mark. The residue at position 38 (serine 38) is a Phosphoserine; by PKA. The interval 39–42 is important for interaction with CTNNBL1; that stretch reads PTSF. Residue histidine 56 coordinates Zn(2+). Residue glutamate 58 is the Proton donor of the active site. Positions 87 and 90 each coordinate Zn(2+). The required for interaction with RNF126 stretch occupies residues 88–116; sequence YDCARHVADFLRGYPNLSLRIFTARLYFC. The short motif at 184-199 is the Nuclear export signal element; sequence LYEVDDLRDAFRTLGL.

This sequence belongs to the cytidine and deoxycytidylate deaminase family. As to quaternary structure, interacts with CTNNBL1; the interaction is important for the immunoglobulin switch activity of AICDA. Interacts (via its NLS) with KPNA1. Interacts with PKA/PRKACA and PRKAR1A/PKR1. Interacts with SUPT6H, TRIM28 and NCL. Directly interacts with MCM3AP; this interaction may favor AICDA recruitment to immunoglobulin variable region genes, hence promoting somatic hypermutations. The cofactor is Zn(2+). In terms of processing, ser-38 is the major site whereas Thr-27 is the minor site of phosphorylation. Phosphorylation regulates its class-switch recombination activity. Probably monoubiquitinated on several residues by RNF126. In terms of tissue distribution, expressed in lymph nodes, spleen and thymus.

It is found in the nucleus. The protein resides in the cytoplasm. The catalysed reaction is a 2'-deoxycytidine in single-stranded DNA + H2O + H(+) = a 2'-deoxyuridine in single-stranded DNA + NH4(+). In terms of biological role, single-stranded DNA-specific cytidine deaminase. Involved in somatic hypermutation (SHM), gene conversion, and class-switch recombination (CSR) in B-lymphocytes by deaminating C to U during transcription of Ig-variable (V) and Ig-switch (S) region DNA. Required for several crucial steps of B-cell terminal differentiation necessary for efficient antibody responses. May also play a role in the epigenetic regulation of gene expression by participating in DNA demethylation. This is Single-stranded DNA cytosine deaminase (AICDA) from Bos taurus (Bovine).